Reading from the N-terminus, the 365-residue chain is MKVVVGMSGGVDSSVTALLLKQQGYEVTGLFMKNWEDDDDDEYCSTRQDLVDVASVCDVIGIDLEVVNFSAEYKDRVFADFLREYEAGRTPNPDILCNSEIKFRCFLDHAMQLGAERIATGHYAQVREWINDGRSEFQLLKAEDGTKDQSYFLYRLNQAQLAKTLFPLGGLYKREVRKIAEAAGLHVATKKDSTGICFIGERPFREFLMRYLPTKPGEIRCLDDDRVLGEHQGLMYHTIGQRKGLHIGGIKGNQDEAGEHEAWYVAKKDVKANVLYVVQGHDHPALLKDRLLATDLNWIAGRDPRTHWVYTAKPRYRTADMPCEIDALGEGRAEIAFATPQWALTPGQSVVVYESKVCLGGGVIV.

ATP contacts are provided by residues 6–13 (GMSGGVDS) and Met32. An interaction with target base in tRNA region spans residues 92–94 (NPD). Cys97 functions as the Nucleophile in the catalytic mechanism. An intrachain disulfide couples Cys97 to Cys197. ATP is bound at residue Gly121. The interaction with tRNA stretch occupies residues 147–149 (KDQ). Cys197 acts as the Cysteine persulfide intermediate in catalysis. The segment at 315–316 (RY) is interaction with tRNA.

This sequence belongs to the MnmA/TRMU family.

The protein localises to the cytoplasm. The enzyme catalyses S-sulfanyl-L-cysteinyl-[protein] + uridine(34) in tRNA + AH2 + ATP = 2-thiouridine(34) in tRNA + L-cysteinyl-[protein] + A + AMP + diphosphate + H(+). In terms of biological role, catalyzes the 2-thiolation of uridine at the wobble position (U34) of tRNA, leading to the formation of s(2)U34. The polypeptide is tRNA-specific 2-thiouridylase MnmA (Azoarcus sp. (strain BH72)).